The chain runs to 166 residues: Mitochondrial fission process protein 1 (166 aa).

A run of 2 helical transmembrane segments spans residues 34 to 54 (SLVP…YVLA) and 80 to 100 (AVVD…GFTI). Lys-123 is modified (N6-succinyllysine). The chain crosses the membrane as a helical span at residues 129-149 (LGLLTIPIIIHPIDRSVDFLL).

The protein belongs to the MTFP1 family.

The protein localises to the mitochondrion inner membrane. Involved in the mitochondrial division probably by regulating membrane fission. Loss-of-function induces the release of cytochrome c, which activates the caspase cascade and leads to apoptosis. This Homo sapiens (Human) protein is Mitochondrial fission process protein 1 (MTFP1).